Consider the following 956-residue polypeptide: MAM domain-containing glycosylphosphatidylinositol anchor protein 1 (956 aa).

The signal sequence occupies residues 1–18 (MEVTCLLLLALIPFHCRG). 2 consecutive Ig-like domains span residues 24–123 (PAQA…KSIR) and 132–230 (PVLT…KSIT). A glycan (N-linked (GlcNAc...) asparagine) is linked at Asn-42. Disulfide bonds link Cys-60/Cys-108 and Cys-157/Cys-214. Residues Asn-235, Asn-257, and Asn-307 are each glycosylated (N-linked (GlcNAc...) asparagine). 4 Ig-like domains span residues 240–323 (PTLK…KTVN), 338–432 (PDMI…VEVN), 440–534 (PTIS…VQLT), and 539–632 (PEVE…FQVS). Disulfide bonds link Cys-262-Cys-308, Cys-357-Cys-415, Cys-463-Cys-514, and Cys-560-Cys-616. The Fibronectin type-III domain occupies 644 to 744 (TPNPTRSHKL…SRVIHYTEPI (101 aa)). Residues 752-919 (NTCHFEDEKI…VTLKKGECPR (168 aa)) enclose the MAM domain. Residues 780 to 789 (LTQNPKRSPN) show a composition bias toward polar residues. The interval 780–799 (LTQNPKRSPNTGPPTDISGT) is disordered. Residue Ser-933 is the site of GPI-anchor amidated serine attachment. The propeptide at 934-956 (GAPRLSSLQLWGSMTIFLLALQR) is removed in mature form.

In terms of assembly, interacts heterophilically through its MAM domain with proteins in axon-rich regions and through its Ig-like domains with proteins in differentiating muscle. Interacts (through the Ig-like domains) with NLGN2. As to expression, high levels detected in developing central and peripheral nervous systems with little expression elsewhere. In brain, highest levels in cerebral cortex and hindbrain at E15. At postnatal day 1, highest levels in basilar pons and superficial layers of the neocortex. In the developing spinal cord, restricted to a subpopulation of neurons in the dorsal and spinal ventral cord, probably D1 interneurons. Expressed in brain.

It is found in the cell membrane. Its function is as follows. Required for radial migration of cortical neurons in the superficial layer of the neocortex. Plays a role in the formation or maintenance of inhibitory synapses. May function by inhibiting the activity of NLGN2. This Rattus norvegicus (Rat) protein is MAM domain-containing glycosylphosphatidylinositol anchor protein 1 (Mdga1).